The primary structure comprises 182 residues: Large ribosomal subunit protein uL5 (182 aa).

This sequence belongs to the universal ribosomal protein uL5 family. As to quaternary structure, part of the 50S ribosomal subunit; part of the 5S rRNA/L5/L18/L25 subcomplex. Contacts the 5S rRNA and the P site tRNA. Forms a bridge to the 30S subunit in the 70S ribosome.

In terms of biological role, this is one of the proteins that bind and probably mediate the attachment of the 5S RNA into the large ribosomal subunit, where it forms part of the central protuberance. In the 70S ribosome it contacts protein S13 of the 30S subunit (bridge B1b), connecting the 2 subunits; this bridge is implicated in subunit movement. Contacts the P site tRNA; the 5S rRNA and some of its associated proteins might help stabilize positioning of ribosome-bound tRNAs. The sequence is that of Large ribosomal subunit protein uL5 from Coxiella burnetii (strain CbuK_Q154) (Coxiella burnetii (strain Q154)).